The chain runs to 192 residues: Elongation factor P (192 aa).

Belongs to the elongation factor P family.

It localises to the cytoplasm. It participates in protein biosynthesis; polypeptide chain elongation. Involved in peptide bond synthesis. Stimulates efficient translation and peptide-bond synthesis on native or reconstituted 70S ribosomes in vitro. Probably functions indirectly by altering the affinity of the ribosome for aminoacyl-tRNA, thus increasing their reactivity as acceptors for peptidyl transferase. The polypeptide is Elongation factor P (Borreliella afzelii (strain PKo) (Borrelia afzelii)).